The chain runs to 347 residues: Haptoglobin (347 aa).

The signal sequence occupies residues 1-18 (MRALGAVVTLLLWGQLFA). Residues 31 to 88 (DSCPKPPEIANGYVEHLVRYRCRQFYRLRAEGDGVYTLNDEKQWMNTVAGEKLPECEA) form the Sushi domain. 4 disulfide bridges follow: Cys52–Cys86, Cys90–Cys207, Cys250–Cys281, and Cys292–Cys322. In terms of domain architecture, Peptidase S1 spans 103–345 (IIGGSMDAKG…LKDWVQETMA (243 aa)). 3 N-linked (GlcNAc...) asparagine glycosylation sites follow: Asn148, Asn182, and Asn264. Residues 259-264 (VPEKKN) are interaction with CD163.

Belongs to the peptidase S1 family. Tetramer of two alpha and two beta chains; disulfide-linked. The hemoglobin/haptoglobin complex is composed of a haptoglobin dimer bound to two hemoglobin alpha-beta dimers. Interacts with CD163. Interacts with ERGIC3. Expressed by the liver and secreted in plasma.

It localises to the secreted. Its function is as follows. As a result of hemolysis, hemoglobin is found to accumulate in the kidney and is secreted in the urine. Haptoglobin captures, and combines with free plasma hemoglobin to allow hepatic recycling of heme iron and to prevent kidney damage. Haptoglobin also acts as an antioxidant, has antibacterial activity and plays a role in modulating many aspects of the acute phase response. Hemoglobin/haptoglobin complexes are rapidly cleared by the macrophage CD163 scavenger receptor expressed on the surface of liver Kupfer cells through an endocytic lysosomal degradation pathway. This is Haptoglobin (Hp) from Mus caroli (Ryukyu mouse).